The sequence spans 921 residues: Guanylate kinase-associated protein mars (921 aa).

S49 bears the Phosphoserine mark. The residue at position 51 (T51) is a Phosphothreonine. Phosphoserine occurs at positions 76 and 170. Y172 is subject to Phosphotyrosine. Disordered regions lie at residues 179–208 and 273–325; these read GKGKAAEPIKPSIPKPTSAAAPPSSNTVAA and RPTP…PLGN. Low complexity-rich tracts occupy residues 193-208 and 273-285; these read KPTSAAAPPSSNTVAA and RPTPATVTKAKTP. S444 carries the post-translational modification Phosphoserine. The segment at 500–531 is disordered; sequence QTTVKEDTGDSTLVPEGTKTPPRRESNGMPNY. Residue T519 is modified to Phosphothreonine. S554 carries the phosphoserine modification. Disordered stretches follow at residues 641-660 and 743-763; these read AGATGKNSQPNDGSEDSKPV and TKVEEPTLEDGLPATSSRHSS. A phosphoserine mark is found at S785 and S792. Disordered regions lie at residues 809-833 and 861-921; these read QNAAKTPPPKPRTSILKTPGTTKRQ and ETVG…SEFM. A Phosphothreonine modification is found at T826. The segment covering 878–907 has biased composition (polar residues); that stretch reads EASTESGSLEQNPGRDSNQENEATPRTYTL.

This sequence belongs to the SAPAP family. As to expression, expressed in the central nervous system and at different stages of gametogenesis. In embryos, it is expressed in central nervous system and brain. In testis, it is strongly expressed in pre-meiotic germ cells, but is not found in somatic or post-meiotic cells.

Its subcellular location is the cell membrane. The protein resides in the nucleus. It localises to the nucleoplasm. It is found in the cytoplasm. The protein localises to the cytoskeleton. Its subcellular location is the spindle. Cell cycle regulator. This Drosophila melanogaster (Fruit fly) protein is Guanylate kinase-associated protein mars (mars).